The following is a 20-amino-acid chain: Cytochrome c oxidase subunit 5B heart, mitochondrial (20 aa).

The tract at residues 1-20 is disordered; it reads XXLKGIPTDEEQATGLEEYA.

It belongs to the cytochrome c oxidase subunit 5B family. As to quaternary structure, component of the cytochrome c oxidase (complex IV, CIV), a multisubunit enzyme composed of 14 subunits. The complex is composed of a catalytic core of 3 subunits MT-CO1, MT-CO2 and MT-CO3, encoded in the mitochondrial DNA, and 11 supernumerary subunits COX4I, COX5A, COX5B, COX6A, COX6B, COX6C, COX7A, COX7B, COX7C, COX8 and NDUFA4, which are encoded in the nuclear genome. The complex exists as a monomer or a dimer and forms supercomplexes (SCs) in the inner mitochondrial membrane with NADH-ubiquinone oxidoreductase (complex I, CI) and ubiquinol-cytochrome c oxidoreductase (cytochrome b-c1 complex, complex III, CIII), resulting in different assemblies (supercomplex SCI(1)III(2)IV(1) and megacomplex MCI(2)III(2)IV(2)).

It localises to the mitochondrion inner membrane. It participates in energy metabolism; oxidative phosphorylation. Component of the cytochrome c oxidase, the last enzyme in the mitochondrial electron transport chain which drives oxidative phosphorylation. The respiratory chain contains 3 multisubunit complexes succinate dehydrogenase (complex II, CII), ubiquinol-cytochrome c oxidoreductase (cytochrome b-c1 complex, complex III, CIII) and cytochrome c oxidase (complex IV, CIV), that cooperate to transfer electrons derived from NADH and succinate to molecular oxygen, creating an electrochemical gradient over the inner membrane that drives transmembrane transport and the ATP synthase. Cytochrome c oxidase is the component of the respiratory chain that catalyzes the reduction of oxygen to water. Electrons originating from reduced cytochrome c in the intermembrane space (IMS) are transferred via the dinuclear copper A center (CU(A)) of subunit 2 and heme A of subunit 1 to the active site in subunit 1, a binuclear center (BNC) formed by heme A3 and copper B (CU(B)). The BNC reduces molecular oxygen to 2 water molecules using 4 electrons from cytochrome c in the IMS and 4 protons from the mitochondrial matrix. This Oncorhynchus mykiss (Rainbow trout) protein is Cytochrome c oxidase subunit 5B heart, mitochondrial.